Consider the following 431-residue polypeptide: Ammonium transporter 3 (431 aa).

Topologically, residues 1–27 (MEQFSTSSSESSDSSSEYSLEFYMDTS) are extracellular. Residues 28-48 (WVLDAANLVFFMQAGFGMLEA) traverse the membrane as a helical segment. At 49-63 (GMVRAKNTKSILLKN) the chain is on the cytoplasmic side. The helical transmembrane segment at 64–84 (LINTAICAISYYCVGHSFAYG) threads the bilayer. Topologically, residues 85–102 (KVNPNSFVGFGNFFLMDY) are extracellular. A helical membrane pass occupies residues 103–125 (THYAYWMIQWAYAATATTIATGA). Residues 126-134 (MAERLQLHC) lie on the Cytoplasmic side of the membrane. Residues 135-155 (YILFTLVQTILIYPFVAHWIW) form a helical membrane-spanning segment. The Extracellular portion of the chain corresponds to 156-160 (SQNGW). A helical transmembrane segment spans residues 161–181 (LFDLGIVDFAGGAVIHIVAGI). The Cytoplasmic portion of the chain corresponds to 182–211 (TGACGSFLLGPRIGRFNQESGKPKNLPGHS). Residues 212-232 (VVLMSLGAMILWYSWYGYTAG) traverse the membrane as a helical segment. Residues 233 to 249 (ASLGMTRSRVLPASRVS) lie on the Extracellular side of the membrane. A helical transmembrane segment spans residues 250–270 (VVVTLSGATGLITVLGIGKIF). The Cytoplasmic segment spans residues 271-300 (NGHYDLVKGINGLIAGLVSSTSSCAYIEPW). Residues 301–321 (AAIIIGFIGGIVYWFSSWALL) form a helical membrane-spanning segment. At 322–333 (NWLRLDDPVDST) the chain is on the extracellular side. A helical transmembrane segment spans residues 334–354 (AIHLFGGCWSLISVAFFATHG). The Cytoplasmic segment spans residues 355–357 (RVR). A helical membrane pass occupies residues 358–378 (NPDIILPGGIFYGGGISLLWV). A topological domain (extracellular) is located at residue glutamine 379. Residues 380–400 (LVGMVLAILWAGFLSGIFFFT) traverse the membrane as a helical segment. Topologically, residues 401–431 (MDYFGKLRVDVDTELAGLDNSNHGGSAYIFD) are cytoplasmic.

The protein belongs to the ammonia transporter channel (TC 1.A.11.2) family.

The protein resides in the cell membrane. Its subcellular location is the endosome membrane. It localises to the cytoplasmic vesicle. The protein localises to the phagosome membrane. In terms of biological role, ammonium transporter that mediates the import of ammonium in prespore cells. Controls ammonium homeostasis during growth and development. Ammonium has been shown to function as a morphogen at multiple steps during the development. May function as an ammonia sensor that relays information concerning ammonia concentrations to the signaling pathway involved in the slug versus culmination choice and regulates prestalk gene expression. The polypeptide is Ammonium transporter 3 (amtC) (Dictyostelium discoideum (Social amoeba)).